The sequence spans 72 residues: MSKEEVLEFSGIVTELLPNAMFRVKLENDHEIIAHTAGRMRKNRIRVLAGDKIMVEMTPYDLTKGRIIYRYK.

The S1-like domain occupies 1-72; that stretch reads MSKEEVLEFS…TKGRIIYRYK (72 aa).

It belongs to the IF-1 family. Component of the 30S ribosomal translation pre-initiation complex which assembles on the 30S ribosome in the order IF-2 and IF-3, IF-1 and N-formylmethionyl-tRNA(fMet); mRNA recruitment can occur at any time during PIC assembly.

Its subcellular location is the cytoplasm. In terms of biological role, one of the essential components for the initiation of protein synthesis. Stabilizes the binding of IF-2 and IF-3 on the 30S subunit to which N-formylmethionyl-tRNA(fMet) subsequently binds. Helps modulate mRNA selection, yielding the 30S pre-initiation complex (PIC). Upon addition of the 50S ribosomal subunit IF-1, IF-2 and IF-3 are released leaving the mature 70S translation initiation complex. In Bartonella henselae (strain ATCC 49882 / DSM 28221 / CCUG 30454 / Houston 1) (Rochalimaea henselae), this protein is Translation initiation factor IF-1.